Here is a 172-residue protein sequence, read N- to C-terminus: Adenine phosphoribosyltransferase (172 aa).

Belongs to the purine/pyrimidine phosphoribosyltransferase family. As to quaternary structure, homodimer.

Its subcellular location is the cytoplasm. The catalysed reaction is AMP + diphosphate = 5-phospho-alpha-D-ribose 1-diphosphate + adenine. Its pathway is purine metabolism; AMP biosynthesis via salvage pathway; AMP from adenine: step 1/1. Catalyzes a salvage reaction resulting in the formation of AMP, that is energically less costly than de novo synthesis. In Crocosphaera subtropica (strain ATCC 51142 / BH68) (Cyanothece sp. (strain ATCC 51142)), this protein is Adenine phosphoribosyltransferase.